A 170-amino-acid polypeptide reads, in one-letter code: Metalloproteinase inhibitor 4 (170 aa).

The region spanning 1-105 (ISSEKVVPAS…SLNHHYHLNC (105 aa)) is the NTR domain. 2 involved in metalloproteinase-binding regions span residues 6-9 (VVPA) and 48-49 (SS). Cystine bridges form between cysteine 107-cysteine 154, cysteine 112-cysteine 117, and cysteine 125-cysteine 146.

The protein belongs to the protease inhibitor I35 (TIMP) family.

Its subcellular location is the secreted. In terms of biological role, complexes with metalloproteinases (such as collagenases) and irreversibly inactivates them by binding to their catalytic zinc cofactor. The polypeptide is Metalloproteinase inhibitor 4 (TIMP4) (Oryctolagus cuniculus (Rabbit)).